The following is a 431-amino-acid chain: MKNVDIFKESEEYMPGGVNSPVRAFKGVNLNPPIIKSGKGVIIKDEEDNEYIDFVLAWGPLILGHCDDDVVEAIKEVSSMALAFGAPTKLELDLAKFICTNLDNVEMIRMVNSGTEATMSAVKLARGYTKRKRIVKFAGCYHGHFDGFLIEAGSGVMTGGIPGSLGVPNESIENTLIGIYNDKEQITELFKKYGNEIAGVIIEPVAGNMGVIKSENDFMETLRDLCNQYGSLLIFDEVMSGFRVAFKGAQSLFNVKPDLVTYAKIMGGGLPCGAYGGRKEIMKNLSPLGGVYQAGTMSGNPIVMAAGIATLNKLKNNQNYYDHIENIGARLEEGIINISKKYDLPVVMNRVGGMMTLFFNDLKEVRTYDDVKKCDVNRFNRYFEHMLKSGFNLPPSQFEALFLSVQHKESHIDAFLKAFEEFALNENKMSL.

Residue Lys-264 is modified to N6-(pyridoxal phosphate)lysine.

It belongs to the class-III pyridoxal-phosphate-dependent aminotransferase family. HemL subfamily. Homodimer. Pyridoxal 5'-phosphate is required as a cofactor.

The protein localises to the cytoplasm. The catalysed reaction is (S)-4-amino-5-oxopentanoate = 5-aminolevulinate. The protein operates within porphyrin-containing compound metabolism; protoporphyrin-IX biosynthesis; 5-aminolevulinate from L-glutamyl-tRNA(Glu): step 2/2. This is Glutamate-1-semialdehyde 2,1-aminomutase from Clostridium beijerinckii (strain ATCC 51743 / NCIMB 8052) (Clostridium acetobutylicum).